Here is a 253-residue protein sequence, read N- to C-terminus: Chitooligosaccharide deacetylase (253 aa).

Mg(2+)-binding residues include histidine 61 and histidine 126.

This sequence belongs to the YdjC deacetylase family. ChbG subfamily. In terms of assembly, homodimer. Mg(2+) is required as a cofactor.

Its subcellular location is the cytoplasm. It catalyses the reaction N,N'-diacetylchitobiose + H2O = N-acetyl-beta-D-glucosaminyl-(1-&gt;4)-D-glucosamine + acetate. It carries out the reaction diacetylchitobiose-6'-phosphate + H2O = N'-monoacetylchitobiose-6'-phosphate + acetate. Its pathway is glycan degradation; chitin degradation. Functionally, involved in the degradation of chitin. ChbG is essential for growth on the acetylated chitooligosaccharides chitobiose and chitotriose but is dispensable for growth on cellobiose and chitosan dimer, the deacetylated form of chitobiose. Deacetylation of chitobiose-6-P and chitotriose-6-P is necessary for both the activation of the chb promoter by the regulatory protein ChbR and the hydrolysis of phosphorylated beta-glucosides by the phospho-beta-glucosidase ChbF. Catalyzes the removal of only one acetyl group from chitobiose-6-P to yield monoacetylchitobiose-6-P, the inducer of ChbR and the substrate of ChbF. The protein is Chitooligosaccharide deacetylase of Yersinia pseudotuberculosis serotype O:1b (strain IP 31758).